The chain runs to 150 residues: Small ribosomal subunit protein uS11x (150 aa).

Belongs to the universal ribosomal protein uS11 family.

It localises to the cytoplasm. This chain is Small ribosomal subunit protein uS11x (RPS14C), found in Arabidopsis thaliana (Mouse-ear cress).